The primary structure comprises 286 residues: Bifunctional protein FolD (286 aa).

NADP(+) contacts are provided by residues 165 to 167, serine 190, and valine 231; that span reads GRS.

Belongs to the tetrahydrofolate dehydrogenase/cyclohydrolase family. In terms of assembly, homodimer.

The catalysed reaction is (6R)-5,10-methylene-5,6,7,8-tetrahydrofolate + NADP(+) = (6R)-5,10-methenyltetrahydrofolate + NADPH. The enzyme catalyses (6R)-5,10-methenyltetrahydrofolate + H2O = (6R)-10-formyltetrahydrofolate + H(+). It functions in the pathway one-carbon metabolism; tetrahydrofolate interconversion. Functionally, catalyzes the oxidation of 5,10-methylenetetrahydrofolate to 5,10-methenyltetrahydrofolate and then the hydrolysis of 5,10-methenyltetrahydrofolate to 10-formyltetrahydrofolate. This chain is Bifunctional protein FolD, found in Bacillus thuringiensis (strain Al Hakam).